A 226-amino-acid polypeptide reads, in one-letter code: ATP synthase subunit a (226 aa).

The next 5 helical transmembrane spans lie at 18–38, 74–94, 100–120, 158–180, and 197–217; these read LSLN…SYWL, FISL…PYIF, LTLT…YGWI, LAVR…GNTG, and IALL…FAVL.

Belongs to the ATPase A chain family. F-type ATPases have 2 components, CF(1) - the catalytic core - and CF(0) - the membrane proton channel. CF(1) has five subunits: alpha(3), beta(3), gamma(1), delta(1), epsilon(1). CF(0) has three main subunits: a, b and c.

Its subcellular location is the mitochondrion inner membrane. Functionally, mitochondrial membrane ATP synthase (F(1)F(0) ATP synthase or Complex V) produces ATP from ADP in the presence of a proton gradient across the membrane which is generated by electron transport complexes of the respiratory chain. F-type ATPases consist of two structural domains, F(1) - containing the extramembraneous catalytic core and F(0) - containing the membrane proton channel, linked together by a central stalk and a peripheral stalk. During catalysis, ATP synthesis in the catalytic domain of F(1) is coupled via a rotary mechanism of the central stalk subunits to proton translocation. Key component of the proton channel; it may play a direct role in the translocation of protons across the membrane. The protein is ATP synthase subunit a (mt:ATPase6) of Anopheles gambiae (African malaria mosquito).